We begin with the raw amino-acid sequence, 773 residues long: C-Maf-inducing protein (773 aa).

A disordered region spans residues 1-28; the sequence is MDVTSSSGGGDPRQIEETKPLLGSDVSG. Positions 54–163 constitute a PH domain; that stretch reads LLQEGDIQVC…HSLQWKKKIY (110 aa). 4 positions are modified to phosphoserine: Ser-349, Ser-377, Ser-382, and Ser-660. LRR repeat units lie at residues 663–686, 687–707, 712–732, and 736–756; these read NLEN…IKLP, SLKQ…RLLS, MLQV…LALS, and SLCS…EDLK.

Interacts with FLNA.

It is found in the nucleus. The protein resides in the cytoplasm. Its function is as follows. Plays a role in T-cell signaling pathway. This Mus musculus (Mouse) protein is C-Maf-inducing protein (Cmip).